The sequence spans 468 residues: Argininosuccinate lyase (468 aa).

2-(N(omega)-L-arginino)succinate is bound by residues serine 33, asparagine 121, and threonine 166. Residue histidine 167 is the Proton acceptor of the active site. Serine 288 acts as the Proton donor in catalysis. 4 residues coordinate 2-(N(omega)-L-arginino)succinate: asparagine 296, tyrosine 328, glutamine 333, and lysine 336.

Belongs to the lyase 1 family. Argininosuccinate lyase subfamily. Homotetramer.

The enzyme catalyses 2-(N(omega)-L-arginino)succinate = fumarate + L-arginine. It participates in amino-acid biosynthesis; L-arginine biosynthesis; L-arginine from L-ornithine and carbamoyl phosphate: step 3/3. The sequence is that of Argininosuccinate lyase (ARG4) from Candida albicans (Yeast).